The following is a 478-amino-acid chain: Catalase easC (478 aa).

The active site involves His54. Tyr343 is a binding site for heme. A disordered region spans residues 459 to 478 (VAEKARPDSPSRAQPGQLRL).

Belongs to the catalase family. Heme serves as cofactor.

Its pathway is alkaloid biosynthesis; ergot alkaloid biosynthesis. In terms of biological role, catalase; part of the gene cluster that mediates the biosynthesis of fungal ergot alkaloid. DmaW catalyzes the first step of ergot alkaloid biosynthesis by condensing dimethylallyl diphosphate (DMAP) and tryptophan to form 4-dimethylallyl-L-tryptophan. The second step is catalyzed by the methyltransferase easF that methylates 4-dimethylallyl-L-tryptophan in the presence of S-adenosyl-L-methionine, resulting in the formation of 4-dimethylallyl-L-abrine. The catalase easC and the FAD-dependent oxidoreductase easE then transform 4-dimethylallyl-L-abrine to chanoclavine-I which is further oxidized by easD in the presence of NAD(+), resulting in the formation of chanoclavine-I aldehyde. Chanoclavine-I aldehyde is the precursor of ergoamides and ergopeptines in Clavicipitaceae, and clavine-type alcaloids such as fumiclavine in Trichocomaceae. However, the metabolites downstream of chanoclavine-I aldehyde in Arthrodermataceae have not been identified yet. This chain is Catalase easC, found in Arthroderma benhamiae (strain ATCC MYA-4681 / CBS 112371) (Trichophyton mentagrophytes).